Consider the following 472-residue polypeptide: Major capsid protein (472 aa).

The protein belongs to the NCLDV major capsid protein family. As to quaternary structure, homotrimer. Post-translationally, the N-terminus is blocked.

It localises to the virion. Major capsid protein that self assembles to form an icosahedral capsid. Represents around 50% of the total virion protein mass. The protein is Major capsid protein (MCP) of Simulium (IIV-22).